The chain runs to 308 residues: ATP synthase gamma chain (308 aa).

It belongs to the ATPase gamma chain family. In terms of assembly, F-type ATPases have 2 components, CF(1) - the catalytic core - and CF(0) - the membrane proton channel. CF(1) has five subunits: alpha(3), beta(3), gamma(1), delta(1), epsilon(1). CF(0) has three main subunits: a, b and c.

The protein localises to the cell membrane. In terms of biological role, produces ATP from ADP in the presence of a proton gradient across the membrane. The gamma chain is believed to be important in regulating ATPase activity and the flow of protons through the CF(0) complex. This is ATP synthase gamma chain from Saccharopolyspora erythraea (strain ATCC 11635 / DSM 40517 / JCM 4748 / NBRC 13426 / NCIMB 8594 / NRRL 2338).